A 158-amino-acid polypeptide reads, in one-letter code: Trafficking protein particle complex subunit 6B (158 aa).

The protein belongs to the TRAPP small subunits family. BET3 subfamily. Homodimer. Part of a TRAPP complex. Heterodimer with TRAPPC3. The heterodimer TRAPPC6B-TRAPPC3 interacts with TRAPPC1 likely providing a core for TRAPP complex formation. In terms of tissue distribution, widely expressed. Expressed in lung, heart, liver, spleen, brain and kidney.

It is found in the golgi apparatus. It localises to the cis-Golgi network. The protein localises to the endoplasmic reticulum. In terms of biological role, component of a transport protein particle (TRAPP) complex that may function in specific stages of inter-organelle traffic. Specifically involved in the early development of neural circuitry, likely by controlling the frequency and amplitude of intracellular calcium transients implicated in the regulation of neuron differentiation and survival. The protein is Trafficking protein particle complex subunit 6B of Mus musculus (Mouse).